Reading from the N-terminus, the 243-residue chain is 1-(5-phosphoribosyl)-5-[(5-phosphoribosylamino)methylideneamino] imidazole-4-carboxamide isomerase (243 aa).

D8 functions as the Proton acceptor in the catalytic mechanism. Catalysis depends on D128, which acts as the Proton donor.

The protein belongs to the HisA/HisF family.

The protein localises to the cytoplasm. It catalyses the reaction 1-(5-phospho-beta-D-ribosyl)-5-[(5-phospho-beta-D-ribosylamino)methylideneamino]imidazole-4-carboxamide = 5-[(5-phospho-1-deoxy-D-ribulos-1-ylimino)methylamino]-1-(5-phospho-beta-D-ribosyl)imidazole-4-carboxamide. Its pathway is amino-acid biosynthesis; L-histidine biosynthesis; L-histidine from 5-phospho-alpha-D-ribose 1-diphosphate: step 4/9. This chain is 1-(5-phosphoribosyl)-5-[(5-phosphoribosylamino)methylideneamino] imidazole-4-carboxamide isomerase, found in Opitutus terrae (strain DSM 11246 / JCM 15787 / PB90-1).